A 126-amino-acid chain; its full sequence is C-type natriuretic peptide (126 aa).

The N-terminal stretch at 1-23 (MHLSQLLACALLLTLLSLRPSEA) is a signal peptide. The disordered stretch occupies residues 20–71 (PSEAKPGAPPKVPRTPPAEELAEPQAAGGGQKKGDKAPGGGGANLKGDRSRL). The propeptide occupies 24–73 (KPGAPPKVPRTPPAEELAEPQAAGGGQKKGDKAPGGGGANLKGDRSRLLR). The segment covering 26–35 (GAPPKVPRTP) has biased composition (pro residues). The segment covering 46 to 63 (AGGGQKKGDKAPGGGGAN) has biased composition (gly residues). Cys-110 and Cys-126 are joined by a disulfide.

The protein belongs to the natriuretic peptide family. In terms of processing, degraded by IDE (in vitro). As to expression, in the kidney, predominantly expressed in the distal tubular cells (at protein level).

The protein resides in the secreted. Hormone which plays a role in endochondral ossification through regulation of cartilaginous growth plate chondrocytes proliferation and differentiation. May also be vasoactive and natriuretic. Acts by specifically binding and stimulating NPR2 to produce cGMP. Binds the clearance receptor NPR3. The polypeptide is C-type natriuretic peptide (NPPC) (Homo sapiens (Human)).